A 112-amino-acid polypeptide reads, in one-letter code: uncharacterized protein (112 aa).

This is an uncharacterized protein from Archaeoglobus fulgidus (strain ATCC 49558 / DSM 4304 / JCM 9628 / NBRC 100126 / VC-16).